The primary structure comprises 1115 residues: Lateral signaling target protein 2 homolog (1115 aa).

Disordered regions lie at residues 308-488, 545-586, 600-742, and 879-1027; these read PLGS…DSDS, SEDD…PSTS, RLPS…SLSD, and VQSS…PDGK. The span at 322–361 shows a compositional bias: low complexity; that stretch reads NNSSSTTNTSNNNNNNTNNNNSSSGSDCTNNDKTGTTTNT. The segment covering 363 to 373 has biased composition (basic and acidic residues); the sequence is KPVERLVDHRN. Low complexity-rich tracts occupy residues 374 to 417 and 425 to 444; these read NNTT…TPTA and PSHSIASTSSAATTSTNSPA. A compositionally biased stretch (acidic residues) spans 449–488; it reads YDDDDEDDDDDDVHADVEEDEDESGILDSDEHDLNDDSDS. Low complexity-rich tracts occupy residues 558–577 and 600–614; these read QQQQPQQQLEHHQQQLQQQQ and RLPSSSSDNEPSSNN. Phosphoserine occurs at positions 603 and 604. The span at 615 to 628 shows a compositional bias: polar residues; that stretch reads QQMTIKSPSEQTTT. Positions 632–655 are enriched in basic residues; it reads SNRHRHHSHHHHHHHHSHHHHHHQ. The segment covering 658–676 has biased composition (low complexity); sequence AAVAVAAAQDEQHNNNQPH. Basic residues predominate over residues 677–706; the sequence is SHSHSSSHHHHHNHQSHSHPHRANRSTRKR. 3 stretches are compositionally biased toward low complexity: residues 714–726, 733–742, and 881–901; these read TITTTKTTSGGEQ, DSSTASSLSD, and SSNSGNSSSSNSSSSSSAARS. The residue at position 908 (Ser-908) is a Phosphoserine. Low complexity-rich tracts occupy residues 921-975 and 988-1020; these read QQQQ…SPVS and TTTTLSTSIGTAATTPTGATTTGVTTTTTMSPP. The FYVE-type zinc-finger motif lies at 1025–1085; it reads DGKAPRCMSC…VCRECFMREV (61 aa). Zn(2+)-binding residues include Cys-1031, Cys-1034, Cys-1047, Cys-1050, Cys-1055, Cys-1058, Cys-1077, and Cys-1080. The disordered stretch occupies residues 1088-1115; that stretch reads SHSHGQSQSQIHSPTQQAGGRPQAASAS. Low complexity predominate over residues 1090–1100; sequence SHGQSQSQIHS.

The protein belongs to the lst-2 family.

Its function is as follows. Negative regulator of epidermal growth factor receptor (EGFR) signaling. The chain is Lateral signaling target protein 2 homolog from Drosophila grimshawi (Hawaiian fruit fly).